The following is a 312-amino-acid chain: Malate dehydrogenase (312 aa).

NAD(+)-binding positions include 12–17 and Asp-36; that span reads GSGFTG. Positions 87 and 93 each coordinate substrate. NAD(+)-binding positions include Asn-100 and 123–125; that span reads LTN. Residue Asn-125 participates in substrate binding. Ser-149 is subject to Phosphoserine. Residue Arg-156 coordinates substrate. The active-site Proton acceptor is His-180.

It belongs to the LDH/MDH superfamily. MDH type 3 family.

It carries out the reaction (S)-malate + NAD(+) = oxaloacetate + NADH + H(+). Catalyzes the reversible oxidation of malate to oxaloacetate. The protein is Malate dehydrogenase of Oceanobacillus iheyensis (strain DSM 14371 / CIP 107618 / JCM 11309 / KCTC 3954 / HTE831).